Consider the following 1114-residue polypeptide: MTISDKIRIYELSRDLNLENKDILDAAQKLSISVKSHSSSISAEEAKKIKNLINKKNSDKKILSINKPSIKKDNFKQNKSPSISSKKETPLKDNSNKKPLLIKPLNKPESVKIISNQLQNSNKPNIVNTSQSRANLTNTNINSKTSQNLNQDKKTFENNITPPIKSPAKPPIQLIAKPKNINNNVKSNESSQNISSAGDNRRLSNKPDQNTNKPKTKNYDSKIKTPELVGAPIRREDPKINPNKQNNKQNIAFKQTGSNRIGSPNRPGMPNNRPGLRNKPSDQGRPGSFNRQGNPNRPGMPNNRPGLRNKPSDQGRHGSFNRQGNPNRPGMPNNRPGSKFNGQNSSGIRKPVSPNELLQLQKNNNSEKDNKDKNNNAKQNINGPNQKAKAPNMRPNATPSSKKPPHRAFSNSSKKPGKTDWDDSAKLEALRSKNPQKQRQKVHIIGENDDSLTSETSGYSGEKISILSASLARPKKEKSEETKSQKSIKQFKKKKKETTRQRQKRRAMELKAAKEAKQVRPEMIIVPEDNLTVQELADKLSLESSEIIKSLFFKGITATVTQSLDLATIETVAEEFGVPVLQDDIQEAAEKTVDMIESDDIDNLIRRPPVITVMGHVDHGKTSLLDSIRESRVASGEAGGITQHIGAYQVEFEHESQKKKLTFLDTPGHEAFTAMRARGTKVTDVAVLVVAADDGCRPQTLEAISHARAAKVPIVVAINKIDKEGASPDRVKQELSEKDLIAEDWGGDTVMVPVSAIKKQNIDKLLEMILLVSEVEDLQANPDRFAKGTVIEAHLDKAKGPVATLLVQNGTLKSGDVLAAGSVLGKIRAMVDEHGNRIKEAGPSFPVEALGFSEVPTAGDEFEVYPDEKAGRAIVGERATDARATKLAQQMASRRVSLSSLSTQANDGELKELNLILKADVQGSVEAILGSLEQLPKNEVQVRVLFSAPGEITETDIDLAAASGSVIIGFNTSLASGAKRAADANDVDIREYEVIYKLLEDIQLAMEGLLEPDLVEESLGQAEVRATFSVGKGAIAGCYIQTGKLQRNCSLRVIRSEKVIFEGNLDSLKRAKDDVKEVNTGFECGVGCDKFSSWIEGDVIEAFKFVTKKRTLSQ.

Disordered regions lie at residues serine 69–isoleucine 102 and isoleucine 181–alanine 507. Basic and acidic residues predominate over residues serine 85 to asparagine 96. The segment covering isoleucine 181–glycine 198 has biased composition (polar residues). Residues isoleucine 240–isoleucine 251 are compositionally biased toward low complexity. Over residues alanine 252–isoleucine 261 the composition is skewed to polar residues. Composition is skewed to low complexity over residues glycine 262–asparagine 278, asparagine 290–asparagine 309, and asparagine 321–glycine 337. Over residues asparagine 365–asparagine 375 the composition is skewed to basic and acidic residues. Positions asparagine 376–asparagine 385 are enriched in low complexity. The span at glycine 417–arginine 431 shows a compositional bias: basic and acidic residues. Basic residues predominate over residues lysine 489–arginine 505. The 173-residue stretch at arginine 606–leucine 778 folds into the tr-type G domain. Positions glycine 615–threonine 622 are G1. Residue glycine 615–threonine 622 coordinates GTP. The tract at residues glycine 640–histidine 644 is G2. A G3 region spans residues aspartate 665–glycine 668. GTP-binding positions include aspartate 665 to histidine 669 and asparagine 719 to aspartate 722. A G4 region spans residues asparagine 719–aspartate 722. Positions serine 755–isoleucine 757 are G5.

The protein belongs to the TRAFAC class translation factor GTPase superfamily. Classic translation factor GTPase family. IF-2 subfamily.

Its subcellular location is the cytoplasm. Functionally, one of the essential components for the initiation of protein synthesis. Protects formylmethionyl-tRNA from spontaneous hydrolysis and promotes its binding to the 30S ribosomal subunits. Also involved in the hydrolysis of GTP during the formation of the 70S ribosomal complex. This is Translation initiation factor IF-2 from Prochlorococcus marinus (strain MIT 9301).